A 490-amino-acid chain; its full sequence is Angiopoietin-related protein 1 (490 aa).

The first 22 residues, 1-22, serve as a signal peptide directing secretion; it reads MKAFVWTLSVLLFLLGSGHCKG. A coiled-coil region spans residues 79–167; that stretch reads ITRMDLENLK…LNVTTEMLKM (89 aa). Asn159 and Asn187 each carry an N-linked (GlcNAc...) asparagine glycan. A Fibrinogen C-terminal domain is found at 270–490; that stretch reads FINEGPFKDC…AVQMMIKPID (221 aa). 2 disulfides stabilise this stretch: Cys279/Cys308 and Cys431/Cys444.

Its subcellular location is the secreted. The sequence is that of Angiopoietin-related protein 1 (Angptl1) from Mus musculus (Mouse).